The following is a 479-amino-acid chain: Poly(A) polymerase catalytic subunit (479 aa).

Active-site residues include aspartate 202 and aspartate 204. 3 residues coordinate Ca(2+): aspartate 202, aspartate 204, and aspartate 253.

Belongs to the poxviridae poly(A) polymerase catalytic subunit family. As to quaternary structure, heterodimer of a large (catalytic) subunit and a small (regulatory) subunit.

The catalysed reaction is RNA(n) + ATP = RNA(n)-3'-adenine ribonucleotide + diphosphate. Its function is as follows. Polymerase that creates the 3'-poly(A) tail of mRNA's. This Homo sapiens (Human) protein is Poly(A) polymerase catalytic subunit (OPG063).